An 81-amino-acid chain; its full sequence is U10-myrmicitoxin-Mri1b (81 aa).

The N-terminal stretch at 1 to 26 (MRLSYISLTLAIIFVMAIVHAPETEA) is a signal peptide. The propeptide occupies 27 to 52 (KAYPEADAVAEAIAVGEADAVGVADP). A Valine amide modification is found at Val-80.

This sequence belongs to the formicidae venom precursor-01 superfamily. Expressed by the venom gland.

The protein resides in the secreted. Its function is as follows. Induces paralysis after injection into blowflies (L.caesar), and then death within 24 hours. May have antimicrobial properties, like most ant linear peptides. The chain is U10-myrmicitoxin-Mri1b from Manica rubida (European giant red ant).